The primary structure comprises 507 residues: Cytochrome P450 4A14 (507 aa).

A propeptide spans methionine 1–serine 4 (removed in mature form). Residue glutamate 318 participates in heme binding. Position 437 is a phosphoserine (serine 437). Cysteine 454 is a binding site for heme.

Belongs to the cytochrome P450 family. It depends on heme as a cofactor.

Its subcellular location is the endoplasmic reticulum membrane. The protein resides in the microsome membrane. The catalysed reaction is an omega-methyl-long-chain fatty acid + reduced [NADPH--hemoprotein reductase] + O2 = an omega-hydroxy-long-chain fatty acid + oxidized [NADPH--hemoprotein reductase] + H2O + H(+). It carries out the reaction dodecanoate + reduced [NADPH--hemoprotein reductase] + O2 = (11R)-hydroxydodecanoate + oxidized [NADPH--hemoprotein reductase] + H2O + H(+). It catalyses the reaction dodecanoate + reduced [NADPH--hemoprotein reductase] + O2 = 12-hydroxydodecanoate + oxidized [NADPH--hemoprotein reductase] + H2O + H(+). The enzyme catalyses tetradecanoate + reduced [NADPH--hemoprotein reductase] + O2 = 14-hydroxytetradecanoate + oxidized [NADPH--hemoprotein reductase] + H2O + H(+). Its pathway is lipid metabolism; fatty acid metabolism. Its function is as follows. A cytochrome P450 monooxygenase that catalyzes omega and omega-1 hydroxylation of saturated fatty acids. Exhibits preferential omega versus omega-1 regioselectivity and (R) versus (S) stereoselectivity for hydroxylation of dodecanoic (lauric) acid. Mechanistically, uses molecular oxygen inserting one oxygen atom into a substrate, and reducing the second into a water molecule, with two electrons provided by NADPH via cytochrome P450 reductase (CPR; NADPH-ferrihemoprotein reductase). The protein is Cytochrome P450 4A14 of Rattus norvegicus (Rat).